The primary structure comprises 649 residues: Drebrin (649 aa).

Ala2 bears the N-acetylalanine mark. The ADF-H domain occupies 3–134 (GVSFSGHRLE…DAGAIGQRLS (132 aa)). Phosphoserine occurs at positions 141 and 142. 2 stretches are compositionally biased toward basic and acidic residues: residues 208–236 (QERM…EEHR) and 288–298 (DNPREFFKQQE). 3 disordered regions span residues 208-420 (QERM…PAED), 477-502 (DLWP…PSGT), and 538-620 (EPPA…PPPV). Phosphothreonine is present on residues Thr331 and Thr335. A compositionally biased stretch (polar residues) spans 334 to 348 (PTRSPSDSSTASTPV). Phosphoserine is present on residues Ser337, Ser339, and Ser345. Thr346 carries the post-translational modification Phosphothreonine. Residues 363–374 (QPPPLPPPPPPA) are compositionally biased toward pro residues. Ser416 carries the phosphoserine modification. A Phosphothreonine modification is found at Thr497. Positions 582-594 (NGETTQKEGTQAS) are enriched in polar residues. Ser601 is modified (phosphoserine).

In terms of assembly, interacts with RUFY3. Interacts with CXCR4; this interaction is enhanced by antigenic stimulation. Interacts (via ADF-H domain) with ZMYND8 (via N-terminus); the interaction leads to sequestering of ZMYND8 in the cytoplasm. Expressed in the brain, with expression in the molecular layer of the dentate gyrus, stratum pyramidale, and stratum radiatum of the hippocampus (at protein level). Also expressed in the terminal varicosities distributed along dendritic trees of pyramidal cells in CA4 and CA3 of the hippocampus (at protein level). Expressed in pyramidal cells in CA2, CA1 and the subiculum of the hippocampus (at protein level). Expressed in peripheral blood lymphocytes, including T-cells (at protein level). Expressed in the brain. Expressed in the heart, placenta, lung, skeletal muscle, kidney, pancreas, skin fibroblasts, gingival fibroblasts and bone-derived cells.

The protein resides in the cytoplasm. Its subcellular location is the cell projection. It localises to the dendrite. It is found in the cell cortex. The protein localises to the cell junction. The protein resides in the growth cone. Functionally, actin cytoskeleton-organizing protein that plays a role in the formation of cell projections. Required for actin polymerization at immunological synapses (IS) and for the recruitment of the chemokine receptor CXCR4 to IS. Plays a role in dendritic spine morphogenesis and organization, including the localization of the dopamine receptor DRD1 to the dendritic spines. Involved in memory-related synaptic plasticity in the hippocampus. The sequence is that of Drebrin (DBN1) from Homo sapiens (Human).